Consider the following 374-residue polypeptide: Queuine tRNA-ribosyltransferase (374 aa).

The active-site Proton acceptor is the Asp89. Substrate-binding positions include 89–93 (DSGGF), Asp143, Gln187, and Gly214. An RNA binding region spans residues 245–251 (GVGKPED). Catalysis depends on Asp264, which acts as the Nucleophile. An RNA binding; important for wobble base 34 recognition region spans residues 269-273 (TRNAR). Residues Cys302, Cys304, Cys307, and His333 each coordinate Zn(2+).

Belongs to the queuine tRNA-ribosyltransferase family. In terms of assembly, homodimer. Within each dimer, one monomer is responsible for RNA recognition and catalysis, while the other monomer binds to the replacement base PreQ1. The cofactor is Zn(2+).

The enzyme catalyses 7-aminomethyl-7-carbaguanine + guanosine(34) in tRNA = 7-aminomethyl-7-carbaguanosine(34) in tRNA + guanine. It participates in tRNA modification; tRNA-queuosine biosynthesis. Catalyzes the base-exchange of a guanine (G) residue with the queuine precursor 7-aminomethyl-7-deazaguanine (PreQ1) at position 34 (anticodon wobble position) in tRNAs with GU(N) anticodons (tRNA-Asp, -Asn, -His and -Tyr). Catalysis occurs through a double-displacement mechanism. The nucleophile active site attacks the C1' of nucleotide 34 to detach the guanine base from the RNA, forming a covalent enzyme-RNA intermediate. The proton acceptor active site deprotonates the incoming PreQ1, allowing a nucleophilic attack on the C1' of the ribose to form the product. After dissociation, two additional enzymatic reactions on the tRNA convert PreQ1 to queuine (Q), resulting in the hypermodified nucleoside queuosine (7-(((4,5-cis-dihydroxy-2-cyclopenten-1-yl)amino)methyl)-7-deazaguanosine). This chain is Queuine tRNA-ribosyltransferase, found in Photorhabdus laumondii subsp. laumondii (strain DSM 15139 / CIP 105565 / TT01) (Photorhabdus luminescens subsp. laumondii).